Here is a 909-residue protein sequence, read N- to C-terminus: Yellow mounds protein A (909 aa).

The MIF4G domain maps to 7-283 (LNVVSRILNK…KNLFELKNNK (277 aa)). Disordered regions lie at residues 178-232 (SMGG…NNNI), 415-439 (MESS…SGIK), 460-537 (INLP…SSAP), 627-689 (VPPV…SEAR), and 704-774 (SLSG…AKKH). A compositionally biased stretch (acidic residues) spans 204 to 215 (DDDDHDEEDNEN). Composition is skewed to low complexity over residues 216–231 (NYEN…NNNN) and 417–436 (SSSN…SSSS). Positions 473-490 (RSNSPSLSSVVKQPQSQQ) are enriched in polar residues. Residues 491–525 (NNNNNNNNNNNNTTITTTTSSNNNINNNNNNNNNN) show a composition bias toward low complexity. Residues 721 to 738 (STPTLKSTPAIVQNGGSI) are compositionally biased toward polar residues. Residues 739–756 (TSTSSSSSSSSSSSSSTT) are compositionally biased toward low complexity. Residues 845 to 877 (TMLFDLEEMAQEQQNLEKQNDQQQNLLTQNNQI) adopt a coiled-coil conformation.

Its function is as follows. Plays as essential role in regulating terminal differentiation. The chain is Yellow mounds protein A (yelA) from Dictyostelium discoideum (Social amoeba).